A 363-amino-acid polypeptide reads, in one-letter code: Peptide chain release factor 1 (363 aa).

Position 236 is an N5-methylglutamine (Gln-236). The tract at residues 286-305 (KKEMERSTMRKSQIGSGDRS) is disordered.

This sequence belongs to the prokaryotic/mitochondrial release factor family. Post-translationally, methylated by PrmC. Methylation increases the termination efficiency of RF1.

Its subcellular location is the cytoplasm. Functionally, peptide chain release factor 1 directs the termination of translation in response to the peptide chain termination codons UAG and UAA. The sequence is that of Peptide chain release factor 1 from Wolbachia pipientis subsp. Culex pipiens (strain wPip).